A 384-amino-acid polypeptide reads, in one-letter code: Alanine racemase (384 aa).

The active-site Proton acceptor; specific for D-alanine is the Lys39. The residue at position 39 (Lys39) is an N6-(pyridoxal phosphate)lysine. Residue Arg138 coordinates substrate. The Proton acceptor; specific for L-alanine role is filled by Tyr265. Met312 is a binding site for substrate.

Belongs to the alanine racemase family. Pyridoxal 5'-phosphate serves as cofactor.

It carries out the reaction L-alanine = D-alanine. It functions in the pathway amino-acid biosynthesis; D-alanine biosynthesis; D-alanine from L-alanine: step 1/1. Catalyzes the interconversion of L-alanine and D-alanine. May also act on other amino acids. The sequence is that of Alanine racemase (alr) from Staphylococcus carnosus (strain TM300).